We begin with the raw amino-acid sequence, 290 residues long: Pyridoxal 5'-phosphate synthase subunit PdxS (290 aa).

Asp22 is a D-ribose 5-phosphate binding site. Lys79 serves as the catalytic Schiff-base intermediate with D-ribose 5-phosphate. Residue Gly151 participates in D-ribose 5-phosphate binding. Arg163 contributes to the D-glyceraldehyde 3-phosphate binding site. D-ribose 5-phosphate-binding positions include Gly212 and 233 to 234 (GS).

The protein belongs to the PdxS/SNZ family. In the presence of PdxT, forms a dodecamer of heterodimers.

It carries out the reaction aldehydo-D-ribose 5-phosphate + D-glyceraldehyde 3-phosphate + L-glutamine = pyridoxal 5'-phosphate + L-glutamate + phosphate + 3 H2O + H(+). It functions in the pathway cofactor biosynthesis; pyridoxal 5'-phosphate biosynthesis. Its function is as follows. Catalyzes the formation of pyridoxal 5'-phosphate from ribose 5-phosphate (RBP), glyceraldehyde 3-phosphate (G3P) and ammonia. The ammonia is provided by the PdxT subunit. Can also use ribulose 5-phosphate and dihydroxyacetone phosphate as substrates, resulting from enzyme-catalyzed isomerization of RBP and G3P, respectively. The protein is Pyridoxal 5'-phosphate synthase subunit PdxS of Clostridium botulinum (strain Langeland / NCTC 10281 / Type F).